A 226-amino-acid chain; its full sequence is 3-isopropylmalate dehydratase small subunit (226 aa).

Residues 204–226 form a disordered region; that stretch reads EAETVESAREPEAVEWAGPLADR.

Belongs to the LeuD family. LeuD type 1 subfamily. In terms of assembly, heterodimer of LeuC and LeuD.

The enzyme catalyses (2R,3S)-3-isopropylmalate = (2S)-2-isopropylmalate. It functions in the pathway amino-acid biosynthesis; L-leucine biosynthesis; L-leucine from 3-methyl-2-oxobutanoate: step 2/4. Catalyzes the isomerization between 2-isopropylmalate and 3-isopropylmalate, via the formation of 2-isopropylmaleate. In Bifidobacterium animalis subsp. lactis (strain AD011), this protein is 3-isopropylmalate dehydratase small subunit.